The primary structure comprises 568 residues: MARVEL domain-containing protein 2 (568 aa).

Disordered stretches follow at residues 1–72 (MSGG…YPSD) and 116–163 (SGGV…SYNS). Topologically, residues 1 to 211 (MSGGGSSSGP…YMKSWAGLLR (211 aa)) are cytoplasmic. Residues 29 to 46 (ADPRHPETNLETLHDRDL) show a composition bias toward basic and acidic residues. Over residues 52 to 62 (PLPPPPLPLHP) the composition is skewed to pro residues. The MARVEL domain occupies 205-379 (SWAGLLRILC…SAMVSLKLWR (175 aa)). Residues 212–232 (ILCIVELLLGAAVFACVTAYI) form a helical membrane-spanning segment. The Extracellular segment spans residues 233–266 (HKDNEWYNMFGYSQPYGYTASMQGGYYYSGPKTP). Residues 267-287 (FVLVVAGLAWIVTIILLVLGM) form a helical membrane-spanning segment. Topologically, residues 288–303 (SMYYRTILLDSTWWPL) are cytoplasmic. Residues 304-324 (TEFGINISLFILYMAGAIVYV) form a helical membrane-spanning segment. Residues 325 to 354 (NDTNRGGLCYYQLFNTPVNASFCRVEGGQT) are Extracellular-facing. Residues 355–375 (AAIIFLFVSMLMYFISAMVSL) traverse the membrane as a helical segment. At 376-568 (KLWRHESARK…KVMDWNDGYN (193 aa)) the chain is on the cytoplasmic side. Residues 451–562 (PDYVAKYQAI…RIQEYDKVMD (112 aa)) form the OCEL domain. Residues 462–559 (AEDERERYKA…IKQRIQEYDK (98 aa)) adopt a coiled-coil conformation.

The protein belongs to the ELL/occludin family.

Its subcellular location is the cell membrane. It is found in the cell junction. It localises to the tight junction. Its function is as follows. May play a role in the formation of the epithelial barrier. The polypeptide is MARVEL domain-containing protein 2 (marveld2) (Xenopus tropicalis (Western clawed frog)).